Consider the following 490-residue polypeptide: Betaine aldehyde dehydrogenase (490 aa).

K(+) contacts are provided by Thr26, Ile27, and Asp93. Position 150 to 152 (Gly150 to Trp152) interacts with NAD(+). The active-site Charge relay system is the Lys162. Lys176 to Glu179 lines the NAD(+) pocket. Position 180 (Val180) interacts with K(+). Gly230 to Ser233 lines the NAD(+) pocket. Residue Leu246 coordinates K(+). Glu252 serves as the catalytic Proton acceptor. NAD(+) is bound by residues Gly254, Cys286, and Glu387. The active-site Nucleophile is the Cys286. The residue at position 286 (Cys286) is a Cysteine sulfenic acid (-SOH). Residues Lys457 and Gly460 each coordinate K(+). Glu464 serves as the catalytic Charge relay system.

Belongs to the aldehyde dehydrogenase family. Dimer of dimers. The cofactor is K(+).

The enzyme catalyses betaine aldehyde + NAD(+) + H2O = glycine betaine + NADH + 2 H(+). Its pathway is amine and polyamine biosynthesis; betaine biosynthesis via choline pathway; betaine from betaine aldehyde: step 1/1. Involved in the biosynthesis of the osmoprotectant glycine betaine. Catalyzes the irreversible oxidation of betaine aldehyde to the corresponding acid. The polypeptide is Betaine aldehyde dehydrogenase (Escherichia coli O6:K15:H31 (strain 536 / UPEC)).